A 146-amino-acid chain; its full sequence is MTTSTIEQKDENEPLLATADQVSALIESFIELGVLVHDNQGTQQSHTALTHKTNQVISQLSGLTSSPFTHQFPIPVDVISYIEDGRNPDIYTREFIEVTAKSNARLKGKMKAFARLRDVLGEKLGNEFPRLVDSIDDIKKRTTPEE.

The protein belongs to the Mediator complex subunit 10 family. As to quaternary structure, component of the Mediator complex.

It is found in the nucleus. Component of the Mediator complex, a coactivator involved in the regulated transcription of nearly all RNA polymerase II-dependent genes. Mediator functions as a bridge to convey information from gene-specific regulatory proteins to the basal RNA polymerase II transcription machinery. Mediator is recruited to promoters by direct interactions with regulatory proteins and serves as a scaffold for the assembly of a functional preinitiation complex with RNA polymerase II and the general transcription factors. This is Mediator of RNA polymerase II transcription subunit 10 (NUT2) from Scheffersomyces stipitis (strain ATCC 58785 / CBS 6054 / NBRC 10063 / NRRL Y-11545) (Yeast).